The sequence spans 74 residues: MMPVILLLLLSLAIRCADGKAVQGDSDPSASLLTGDKNHDLPVKRDCTTCAGEECCGRCTCPWGDNCSCIEWGK.

An N-terminal signal peptide occupies residues 1–19 (MMPVILLLLLSLAIRCADG). Residues 20 to 43 (KAVQGDSDPSASLLTGDKNHDLPV) constitute a propeptide that is removed on maturation. Trp72 carries the post-translational modification Tryptophan amide.

Post-translationally, contains four disulfide bonds. In terms of tissue distribution, expressed by the venom duct.

It is found in the secreted. This is Conotoxin Vi15a from Conus virgo (Virgin cone).